Reading from the N-terminus, the 170-residue chain is Photosystem I assembly protein Ycf3 (170 aa).

TPR repeat units lie at residues 35–68 (AFCYYRDGMSAQSEGEYAEALENYYEALRLEEDP), 72–105 (SYIIYNIGLIYASNGEHIKALEYYHQSLELNPRL), and 120–153 (GLKAADKQDNNMSKSMFDKAAEYWKQAIYLAPNN).

The protein belongs to the Ycf3 family.

Its subcellular location is the plastid. It localises to the chloroplast thylakoid membrane. Its function is as follows. Essential for the assembly of the photosystem I (PSI) complex. May act as a chaperone-like factor to guide the assembly of the PSI subunits. This is Photosystem I assembly protein Ycf3 from Gracilaria tenuistipitata var. liui (Red alga).